A 144-amino-acid chain; its full sequence is Austinoid biosynthesis cluster protein S (144 aa).

This sequence belongs to the trt14 isomerase family. Homodimer.

It functions in the pathway secondary metabolite biosynthesis; terpenoid biosynthesis. Functionally, part of the gene cluster that mediates the biosynthesis of calidodehydroaustin, a fungal meroterpenoid. The first step of the pathway is the synthesis of 3,5-dimethylorsellinic acid by the polyketide synthase ausA. 3,5-dimethylorsellinic acid is then prenylated by the polyprenyl transferase ausN. Further epoxidation by the FAD-dependent monooxygenase ausM and cyclization by the probable terpene cyclase ausL lead to the formation of protoaustinoid A. Protoaustinoid A is then oxidized to spiro-lactone preaustinoid A3 by the combined action of the FAD-binding monooxygenases ausB and ausC, and the dioxygenase ausE. Acid-catalyzed keto-rearrangement and ring contraction of the tetraketide portion of preaustinoid A3 by ausJ lead to the formation of preaustinoid A4. The aldo-keto reductase ausK, with the help of ausH, is involved in the next step by transforming preaustinoid A4 into isoaustinone which is in turn hydroxylated by the P450 monooxygenase ausI to form austinolide. The cytochrome P450 monooxygenase ausG modifies austinolide to austinol. Austinol is further acetylated to austin by the O-acetyltransferase ausP, which spontaneously changes to dehydroaustin. The cytochrome P450 monooxygenase ausR then converts dehydroaustin is into 7-dehydrodehydroaustin. The hydroxylation catalyzed by ausR permits the O-acetyltransferase ausQ to add an additional acetyl group to the molecule, leading to the formation of acetoxydehydroaustin. The short chain dehydrogenase ausT catalyzes the reduction of the double bond present between carbon atoms 1 and 2 to convert 7-dehydrodehydroaustin into 1,2-dihydro-7-hydroxydehydroaustin. AusQ catalyzes not only an acetylation reaction but also the addition of the PKS ausV diketide product to 1,2-dihydro-7-hydroxydehydroaustin, forming precalidodehydroaustin. Finally, the iron/alpha-ketoglutarate-dependent dioxygenase converts precalidodehydroaustin into calidodehydroaustin. AusS is necessary for austinoids production and may play a possible function as a regulator. Its function is as follows. May play a possible function as a regulator. The polypeptide is Austinoid biosynthesis cluster protein S (Aspergillus calidoustus).